The following is a 178-amino-acid chain: Large ribosomal subunit protein uL5 (178 aa).

The protein belongs to the universal ribosomal protein uL5 family. In terms of assembly, part of the 50S ribosomal subunit; contacts the 5S rRNA and probably tRNA. Forms a bridge to the 30S subunit in the 70S ribosome.

Functionally, this is one of the proteins that bind and probably mediate the attachment of the 5S RNA into the large ribosomal subunit, where it forms part of the central protuberance. In the 70S ribosome it contacts protein S13 of the 30S subunit (bridge B1b), connecting the 2 subunits; this bridge is implicated in subunit movement. May contact the P site tRNA; the 5S rRNA and some of its associated proteins might help stabilize positioning of ribosome-bound tRNAs. In Sulfolobus acidocaldarius (strain ATCC 33909 / DSM 639 / JCM 8929 / NBRC 15157 / NCIMB 11770), this protein is Large ribosomal subunit protein uL5.